The sequence spans 385 residues: Cytochrome b (385 aa).

A run of 4 helical transmembrane segments spans residues 32-52 (MGSLLGLCLVIQILTGIFMAM), 76-98 (WLLRYTHANGASFFFAVMYMHMA), 113-133 (VWIIGVIIFVATMAAAFLGYC), and 179-199 (FFALHYLVPFIIAALVVMHFM). Residues His-82 and His-96 each contribute to the heme b site. Positions 183 and 197 each coordinate heme b. His-202 lines the a ubiquinone pocket. A run of 4 helical transmembrane segments spans residues 225 to 245 (FIFKDLITVFVFLIIFSLFVF), 289 to 309 (LLGVITMFGAILVLLVLPLTD), 321 to 341 (ISKLFFFLFVFNFILLGVLGS), and 348 to 368 (FVQMGQYATFLYFAYFLIFVP).

It belongs to the cytochrome b family. Fungal cytochrome b-c1 complex contains 10 subunits; 3 respiratory subunits, 2 core proteins and 5 low-molecular weight proteins. Cytochrome b-c1 complex is a homodimer. Requires heme b as cofactor.

It is found in the mitochondrion inner membrane. Component of the ubiquinol-cytochrome c reductase complex (complex III or cytochrome b-c1 complex) that is part of the mitochondrial respiratory chain. The b-c1 complex mediates electron transfer from ubiquinol to cytochrome c. Contributes to the generation of a proton gradient across the mitochondrial membrane that is then used for ATP synthesis. In Monosporozyma servazzii (Yeast), this protein is Cytochrome b (COB).